The following is a 530-amino-acid chain: RNA-binding protein 39 (530 aa).

The disordered stretch occupies residues M1–T146. A2 carries the N-acetylalanine modification. Positions P14 to S32 are enriched in basic and acidic residues. Basic residues-rich tracts occupy residues K33–K56 and K64–Y95. Y95 carries the phosphotyrosine modification. Phosphoserine occurs at positions 97 and 100. K111 participates in a covalent cross-link: Glycyl lysine isopeptide (Lys-Gly) (interchain with G-Cter in SUMO2). S117 is modified (phosphoserine). K119 participates in a covalent cross-link: Glycyl lysine isopeptide (Lys-Gly) (interchain with G-Cter in SUMO2). A compositionally biased stretch (basic residues) spans K119 to P130. Phosphoserine occurs at positions 121 and 136. The span at F131–T146 shows a compositional bias: basic and acidic residues. A Phosphothreonine modification is found at T146. The RRM 1 domain occupies R153–A230. K244 participates in a covalent cross-link: Glycyl lysine isopeptide (Lys-Gly) (interchain with G-Cter in SUMO2). The region spanning M250 to E328 is the RRM 2 domain. The segment at K291–G355 is activating domain. The interaction with JUN stretch occupies residues K291 to Q406. Phosphoserine occurs at positions 334, 337, and 341. An interaction with ESR1 and ESR2 region spans residues G355–Q406. The interaction with NCOA6 stretch occupies residues Q406–R530. The RRM 3 domain occupies E445–L508.

Belongs to the splicing factor SR family. Interacts with NCOA6 and JUN. Interacts with ESR1 and ESR2, in the presence of estradiol (E2). Interacts with RSRC1 (via Arg/Ser-rich domain). Interacts with SF3B1. Interacts with ZNF106 (via N-terminus).

The protein resides in the nucleus. RNA-binding protein that acts as a pre-mRNA splicing factor. Acts by promoting exon inclusion via regulation of exon cassette splicing. Also acts as a transcriptional coactivator for steroid nuclear receptors ESR1/ER-alpha and ESR2/ER-beta, and JUN/AP-1, independently of the pre-mRNA splicing factor activity. The sequence is that of RNA-binding protein 39 (Rbm39) from Mus musculus (Mouse).